Consider the following 321-residue polypeptide: Lipoyl synthase (321 aa).

Residues C68, C73, C79, C94, C98, C101, and S308 each coordinate [4Fe-4S] cluster. Positions 80 to 297 (FNHGTATFMI…KVIAEDLGFS (218 aa)) constitute a Radical SAM core domain.

The protein belongs to the radical SAM superfamily. Lipoyl synthase family. Requires [4Fe-4S] cluster as cofactor.

The protein localises to the cytoplasm. The catalysed reaction is [[Fe-S] cluster scaffold protein carrying a second [4Fe-4S](2+) cluster] + N(6)-octanoyl-L-lysyl-[protein] + 2 oxidized [2Fe-2S]-[ferredoxin] + 2 S-adenosyl-L-methionine + 4 H(+) = [[Fe-S] cluster scaffold protein] + N(6)-[(R)-dihydrolipoyl]-L-lysyl-[protein] + 4 Fe(3+) + 2 hydrogen sulfide + 2 5'-deoxyadenosine + 2 L-methionine + 2 reduced [2Fe-2S]-[ferredoxin]. The protein operates within protein modification; protein lipoylation via endogenous pathway; protein N(6)-(lipoyl)lysine from octanoyl-[acyl-carrier-protein]: step 2/2. Functionally, catalyzes the radical-mediated insertion of two sulfur atoms into the C-6 and C-8 positions of the octanoyl moiety bound to the lipoyl domains of lipoate-dependent enzymes, thereby converting the octanoylated domains into lipoylated derivatives. The polypeptide is Lipoyl synthase (Shewanella amazonensis (strain ATCC BAA-1098 / SB2B)).